A 558-amino-acid polypeptide reads, in one-letter code: Transcription factor RelB (558 aa).

The span at 1–11 (MPSRRAARESA) shows a compositional bias: basic and acidic residues. Residues 1–21 (MPSRRAARESAPELGALGSSD) form a disordered region. Position 19 is a phosphoserine (S19). The leucine-zipper stretch occupies residues 22-50 (LSSLSLTVSRTTDELEIIDEYIKENGFGL). T84 carries the post-translational modification Phosphothreonine. One can recognise an RHD domain in the interval 103–418 (PYLVITEQPK…ESKRRKKKPV (316 aa)). 2 consecutive short sequence motifs (nuclear localization signal) follow at residues 387 to 391 (KKRKR) and 411 to 416 (KRRKKK). The residue at position 552 (S552) is a Phosphoserine.

As to quaternary structure, component of the NF-kappa-B RelB-p50 complex. Component of the NF-kappa-B RelB-p52 complex. Self-associates; the interaction seems to be transient and may prevent degradation allowing for heterodimer formation p50 or p52. Interacts with NFKB1/p50, NFKB2/p52 and NFKB2/p100. Interacts with NFKBID. Interacts with BMAL1 and the interaction is enhanced in the presence of CLOCK. Phosphorylation at 'Thr-103' and 'Ser-573' is followed by proteasomal degradation. As to expression, expressed in intestine, thymus and spleen. Undetectable in liver, bome marrow, kidney and testis.

The protein localises to the nucleus. It is found in the cytoplasm. The protein resides in the cytoskeleton. Its subcellular location is the microtubule organizing center. It localises to the centrosome. In terms of biological role, NF-kappa-B is a pleiotropic transcription factor which is present in almost all cell types and is involved in many biological processed such as inflammation, immunity, differentiation, cell growth, tumorigenesis and apoptosis. NF-kappa-B is a homo- or heterodimeric complex formed by the Rel-like domain-containing proteins RELA/p65, RELB, NFKB1/p105, NFKB1/p50, REL and NFKB2/p52. The dimers bind at kappa-B sites in the DNA of their target genes and the individual dimers have distinct preferences for different kappa-B sites that they can bind with distinguishable affinity and specificity. Different dimer combinations act as transcriptional activators or repressors, respectively. NF-kappa-B is controlled by various mechanisms of post-translational modification and subcellular compartmentalization as well as by interactions with other cofactors or corepressors. NF-kappa-B complexes are held in the cytoplasm in an inactive state complexed with members of the NF-kappa-B inhibitor (I-kappa-B) family. In a conventional activation pathway, I-kappa-B is phosphorylated by I-kappa-B kinases (IKKs) in response to different activators, subsequently degraded thus liberating the active NF-kappa-B complex which translocates to the nucleus. NF-kappa-B heterodimeric RelB-p50 and RelB-p52 complexes are transcriptional activators. RELB neither associates with DNA nor with RELA/p65 or REL. Stimulates promoter activity in the presence of NFKB2/p49. As a member of the NUPR1/RELB/IER3 survival pathway, may allow the development of pancreatic intraepithelial neoplasias. Regulates the circadian clock by repressing the transcriptional activator activity of the CLOCK-BMAL1 heterodimer in a CRY1/CRY2 independent manner. Increased repression of the heterodimer is seen in the presence of NFKB2/p52. Is required for both T and B lymphocyte maturation and function. This is Transcription factor RelB (Relb) from Mus musculus (Mouse).